The chain runs to 344 residues: Phenylalanine--tRNA ligase alpha subunit (344 aa).

Glu256 is a Mg(2+) binding site.

It belongs to the class-II aminoacyl-tRNA synthetase family. Phe-tRNA synthetase alpha subunit type 1 subfamily. Tetramer of two alpha and two beta subunits. The cofactor is Mg(2+).

It localises to the cytoplasm. It carries out the reaction tRNA(Phe) + L-phenylalanine + ATP = L-phenylalanyl-tRNA(Phe) + AMP + diphosphate + H(+). This Anoxybacillus flavithermus (strain DSM 21510 / WK1) protein is Phenylalanine--tRNA ligase alpha subunit.